Consider the following 82-residue polypeptide: Small ribosomal subunit protein bS18 (82 aa).

The disordered stretch occupies residues 1–20 (MSETSSAPVRRPFHRRRKTC).

It belongs to the bacterial ribosomal protein bS18 family. Part of the 30S ribosomal subunit. Forms a tight heterodimer with protein bS6.

Functionally, binds as a heterodimer with protein bS6 to the central domain of the 16S rRNA, where it helps stabilize the platform of the 30S subunit. The polypeptide is Small ribosomal subunit protein bS18 (Rhizobium johnstonii (strain DSM 114642 / LMG 32736 / 3841) (Rhizobium leguminosarum bv. viciae)).